Reading from the N-terminus, the 152-residue chain is Small heat shock protein HspA (152 aa).

The region spanning 29 to 139 is the sHSP domain; the sequence is TAGEANYPPC…KPRRIPIDNL (111 aa).

This sequence belongs to the small heat shock protein (HSP20) family.

This is Small heat shock protein HspA (hspA) from Bradyrhizobium diazoefficiens (strain JCM 10833 / BCRC 13528 / IAM 13628 / NBRC 14792 / USDA 110).